A 185-amino-acid polypeptide reads, in one-letter code: Ribosome-recycling factor (185 aa).

Belongs to the RRF family.

It localises to the cytoplasm. Responsible for the release of ribosomes from messenger RNA at the termination of protein biosynthesis. May increase the efficiency of translation by recycling ribosomes from one round of translation to another. This is Ribosome-recycling factor from Erwinia tasmaniensis (strain DSM 17950 / CFBP 7177 / CIP 109463 / NCPPB 4357 / Et1/99).